Here is a 24-residue protein sequence, read N- to C-terminus: Hemocyanin subunit 4e (24 aa).

The protein belongs to the tyrosinase family. Hemocyanin subfamily. In terms of tissue distribution, hemolymph.

The protein resides in the secreted. It is found in the extracellular space. Hemocyanins are copper-containing oxygen carriers occurring freely dissolved in the hemolymph of many mollusks and arthropods. The chain is Hemocyanin subunit 4e from Maja squinado (Mediterranean spider crab).